A 98-amino-acid polypeptide reads, in one-letter code: NADH-ubiquinone oxidoreductase chain 4L (98 aa).

Helical transmembrane passes span 1 to 21 (MTLIHMNILMAFSMSLVGLLM), 29 to 49 (ALLCLEGMMLSLFVLATLTIL), and 61 to 81 (IILLVFAACEAAIGLALLVMV).

It belongs to the complex I subunit 4L family. As to quaternary structure, core subunit of respiratory chain NADH dehydrogenase (Complex I) which is composed of 45 different subunits.

Its subcellular location is the mitochondrion inner membrane. It catalyses the reaction a ubiquinone + NADH + 5 H(+)(in) = a ubiquinol + NAD(+) + 4 H(+)(out). Core subunit of the mitochondrial membrane respiratory chain NADH dehydrogenase (Complex I) which catalyzes electron transfer from NADH through the respiratory chain, using ubiquinone as an electron acceptor. Part of the enzyme membrane arm which is embedded in the lipid bilayer and involved in proton translocation. The chain is NADH-ubiquinone oxidoreductase chain 4L (MT-ND4L) from Balaenoptera bonaerensis (Antarctic minke whale).